A 59-amino-acid chain; its full sequence is Large ribosomal subunit protein bL32 (59 aa).

The disordered stretch occupies residues 1 to 34 (MAVQKSKVTRSRRGQRRSHDALTGPTLSVDKTTG). Residues 7-16 (KVTRSRRGQR) are compositionally biased toward basic residues.

Belongs to the bacterial ribosomal protein bL32 family.

The protein is Large ribosomal subunit protein bL32 of Marinomonas sp. (strain MWYL1).